Reading from the N-terminus, the 570-residue chain is Methionine--tRNA ligase (570 aa).

The 'HIGH' region motif lies at proline 11–asparagine 21. Cysteine 143, cysteine 146, cysteine 156, and cysteine 159 together coordinate Zn(2+). The short motif at lysine 333 to serine 337 is the 'KMSKS' region element. Lysine 336 serves as a coordination point for ATP.

It belongs to the class-I aminoacyl-tRNA synthetase family. MetG type 1 subfamily. Zn(2+) serves as cofactor.

Its subcellular location is the cytoplasm. The catalysed reaction is tRNA(Met) + L-methionine + ATP = L-methionyl-tRNA(Met) + AMP + diphosphate. Is required not only for elongation of protein synthesis but also for the initiation of all mRNA translation through initiator tRNA(fMet) aminoacylation. The sequence is that of Methionine--tRNA ligase from Pyrobaculum calidifontis (strain DSM 21063 / JCM 11548 / VA1).